Consider the following 207-residue polypeptide: Ribosomal RNA large subunit methyltransferase E (207 aa).

5 residues coordinate S-adenosyl-L-methionine: Gly60, Trp62, Asp80, Asp96, and Asp121. Lys161 serves as the catalytic Proton acceptor.

Belongs to the class I-like SAM-binding methyltransferase superfamily. RNA methyltransferase RlmE family.

It is found in the cytoplasm. It catalyses the reaction uridine(2552) in 23S rRNA + S-adenosyl-L-methionine = 2'-O-methyluridine(2552) in 23S rRNA + S-adenosyl-L-homocysteine + H(+). In terms of biological role, specifically methylates the uridine in position 2552 of 23S rRNA at the 2'-O position of the ribose in the fully assembled 50S ribosomal subunit. This Marinobacter nauticus (strain ATCC 700491 / DSM 11845 / VT8) (Marinobacter aquaeolei) protein is Ribosomal RNA large subunit methyltransferase E.